The primary structure comprises 374 residues: Diels-Alderase fsa2 (374 aa).

Residues 1–216 (MSNVTVSAFT…MDRVWSPLSW (216 aa)) are beta-sandwich motif. The tract at residues 216 to 374 (WPQVMTESYY…VGTGGQCELS (159 aa)) is beta-barrel motif.

The protein belongs to the Diels-Alderase family.

It catalyses the reaction (5S)-3-[(2E,6R,8E,10E,12E)-2,6-dimethyltetradeca-2,8,10,12-tetraenoyl]-5-(hydroxymethyl)pyrrolidine-2,4-dione = trichosetin. Its pathway is mycotoxin biosynthesis. Functionally, diels-Alderase; part of the gene cluster that mediates the biosynthesis of the HIV-1 integrase inhibitor equisetin and of fusarisetin A, both trans-fused decalin-containing tetramic acids showing also antimicrobial activity. The PKS module of fsa1 together with the enoylreductase fsa3 catalyze the formation of the polyketide unit which is then conjugated to L-serine by the condensation domain of the fsa1 NRPS module. Activity of the Dieckmann cyclase domain (RED) results in release of the Dieckmann product intermediate. Diels-Alderase fsa2 is involved in endo-selective Diels-Alder cycloaddition to form the decalin ring, leading to the production of N-desmethylequisetin also called trichosetin. Subsequent N-methylation is carried out by fsa4 to give equisetin. The enzymatic gene responsible for the conversion of equisetin to fusarisetin A has not been identified yet and is probably located outside of the fsa cluster. The sequence is that of Diels-Alderase fsa2 from Fusarium sp. (strain FN080326).